A 755-amino-acid polypeptide reads, in one-letter code: Polycomb protein SUZ12 (755 aa).

Disordered regions lie at residues 26-79 (KMGN…RRIS), 333-377 (NANG…SRRA), and 392-420 (AVGRETRNNSNKRRRGGAYGEDHPPSDDR). Low complexity predominate over residues 30 to 42 (KASSQAQKRSQSQ). Polar residues-rich tracts occupy residues 43–57 (TGDSATSRPATDGSG) and 349–359 (TQPNGTHNEGT). Residues 411-420 (GEDHPPSDDR) show a composition bias toward basic and acidic residues. The C2H2-type zinc-finger motif lies at 436–458 (FACLICGAENERLSQLRAHYMCH). Residues 580 to 645 (IDDSWLLLKH…KADWLVSKRS (66 aa)) form a polycomb protein VEFS-Box region.

Belongs to the VEFS (VRN2-EMF2-FIS2-SU(Z)12) family. In terms of assembly, component of the polycomb repressive complex 2 (PRC2) that consists of four core subunits icluding EZH2, EED, SUZ12, and RBBP4, among which EZH2 is the catalytic subunit and which minimally requires EED and SUZ12 for catalysis.

It localises to the nucleus. In terms of biological role, component of the of the Polycomb Repressive Complex 2 (PRC2), a histone H3 lysine methyltransferase responsible for generating mono-, di-, and tri-methylation on Lys27 (H3K27me1, H3K27me2 and H3K27me3). The tri-methylated form is known to be critical in gene repression, and its proper placement is essential in defining repression patterns during development. SUZ12 is not a catalytic subunit but is required for the complex regulation of histone H3 lysine methylation by EZH2. This Chaetomium thermophilum (strain DSM 1495 / CBS 144.50 / IMI 039719) (Thermochaetoides thermophila) protein is Polycomb protein SUZ12.